A 93-amino-acid polypeptide reads, in one-letter code: Aspartyl/glutamyl-tRNA(Asn/Gln) amidotransferase subunit C (93 aa).

Belongs to the GatC family. Heterotrimer of A, B and C subunits.

The enzyme catalyses L-glutamyl-tRNA(Gln) + L-glutamine + ATP + H2O = L-glutaminyl-tRNA(Gln) + L-glutamate + ADP + phosphate + H(+). It carries out the reaction L-aspartyl-tRNA(Asn) + L-glutamine + ATP + H2O = L-asparaginyl-tRNA(Asn) + L-glutamate + ADP + phosphate + 2 H(+). In terms of biological role, allows the formation of correctly charged Asn-tRNA(Asn) or Gln-tRNA(Gln) through the transamidation of misacylated Asp-tRNA(Asn) or Glu-tRNA(Gln) in organisms which lack either or both of asparaginyl-tRNA or glutaminyl-tRNA synthetases. The reaction takes place in the presence of glutamine and ATP through an activated phospho-Asp-tRNA(Asn) or phospho-Glu-tRNA(Gln). The chain is Aspartyl/glutamyl-tRNA(Asn/Gln) amidotransferase subunit C from Helicobacter pylori (strain HPAG1).